The primary structure comprises 201 residues: ATP-dependent Clp protease proteolytic subunit (201 aa).

Residue Ser-101 is the Nucleophile of the active site. His-126 is a catalytic residue.

The protein belongs to the peptidase S14 family. As to quaternary structure, fourteen ClpP subunits assemble into 2 heptameric rings which stack back to back to give a disk-like structure with a central cavity, resembling the structure of eukaryotic proteasomes.

It is found in the cytoplasm. It catalyses the reaction Hydrolysis of proteins to small peptides in the presence of ATP and magnesium. alpha-casein is the usual test substrate. In the absence of ATP, only oligopeptides shorter than five residues are hydrolyzed (such as succinyl-Leu-Tyr-|-NHMec, and Leu-Tyr-Leu-|-Tyr-Trp, in which cleavage of the -Tyr-|-Leu- and -Tyr-|-Trp bonds also occurs).. Functionally, cleaves peptides in various proteins in a process that requires ATP hydrolysis. Has a chymotrypsin-like activity. Plays a major role in the degradation of misfolded proteins. This is ATP-dependent Clp protease proteolytic subunit from Francisella tularensis subsp. tularensis (strain FSC 198).